The chain runs to 341 residues: tRNA N6-adenosine threonylcarbamoyltransferase (341 aa).

His114 and His118 together coordinate Fe cation. Residues 136–140, Asp169, Gly182, Asp186, and Asn278 each bind substrate; that span reads LVSGG. Asp304 is a Fe cation binding site.

This sequence belongs to the KAE1 / TsaD family. Fe(2+) serves as cofactor.

Its subcellular location is the cytoplasm. The catalysed reaction is L-threonylcarbamoyladenylate + adenosine(37) in tRNA = N(6)-L-threonylcarbamoyladenosine(37) in tRNA + AMP + H(+). Its function is as follows. Required for the formation of a threonylcarbamoyl group on adenosine at position 37 (t(6)A37) in tRNAs that read codons beginning with adenine. Is involved in the transfer of the threonylcarbamoyl moiety of threonylcarbamoyl-AMP (TC-AMP) to the N6 group of A37, together with TsaE and TsaB. TsaD likely plays a direct catalytic role in this reaction. This is tRNA N6-adenosine threonylcarbamoyltransferase from Lactococcus lactis subsp. cremoris (strain MG1363).